The chain runs to 308 residues: Elongation factor Ts (308 aa).

The interval Thr-80 to Val-83 is involved in Mg(2+) ion dislocation from EF-Tu.

This sequence belongs to the EF-Ts family.

Its subcellular location is the cytoplasm. Functionally, associates with the EF-Tu.GDP complex and induces the exchange of GDP to GTP. It remains bound to the aminoacyl-tRNA.EF-Tu.GTP complex up to the GTP hydrolysis stage on the ribosome. The sequence is that of Elongation factor Ts from Verminephrobacter eiseniae (strain EF01-2).